Here is a 582-residue protein sequence, read N- to C-terminus: Frizzled-10 (582 aa).

A signal peptide spans 1–21; it reads MQHPGPRLWLVLQVMIGSCTA. Over 22–226 the chain is Extracellular; the sequence is ISSMDLERPG…DVYWSRDDKR (205 aa). One can recognise an FZ domain in the interval 30-151; the sequence is PGDGKCQPVE…NDPNYLCMEA (122 aa). 5 disulfide bridges follow: cysteine 35-cysteine 96, cysteine 43-cysteine 89, cysteine 80-cysteine 118, cysteine 107-cysteine 148, and cysteine 111-cysteine 135. An N-linked (GlcNAc...) asparagine glycan is attached at asparagine 49. The tract at residues 153 to 189 is disordered; sequence NNGSDEPSRGSGMFPPLFRPQRPHSAQEHPLKDGGPG. N-linked (GlcNAc...) asparagine glycosylation occurs at asparagine 154. The helical transmembrane segment at 227-247 threads the bilayer; the sequence is FAVVWLAIWSVLCFFSSAFTV. Residues 248–263 are Cytoplasmic-facing; sequence LTFLIDPSRFRYPERP. The chain crosses the membrane as a helical span at residues 264–284; the sequence is IIFLSMCYCVYSVGYIIRLFA. Topologically, residues 285–312 are extracellular; sequence GAESIACDRDSGQLYVIQEGLESTGCTL. A helical transmembrane segment spans residues 313–333; it reads VFLVLYYFGMASSLWWVVLTL. Residues 334–352 are Cytoplasmic-facing; the sequence is TWFLAAGKKWGHEAIEANS. The helical transmembrane segment at 353 to 373 threads the bilayer; the sequence is SYFHLAAWAIPAVKTILILVM. Topologically, residues 374–394 are extracellular; it reads RRVAGDELTGVCYVGSMDVNA. Residues 395–415 traverse the membrane as a helical segment; it reads LTGFVLVPLACYLVIGTSFIL. Topologically, residues 416–444 are cytoplasmic; that stretch reads SGFVALFHIRRVMKTGGENTDKLEKLMVR. A helical transmembrane segment spans residues 445–465; it reads IGVFSLLYTVPATCVIACYFY. Residues 466-503 are Extracellular-facing; that stretch reads ERLNMDYWKMLATQHKCKMNNQTKTPDCLMTTSIPAVE. Asparagine 486 is a glycosylation site (N-linked (GlcNAc...) asparagine). A helical membrane pass occupies residues 504-524; the sequence is VFMVKVSMLLVVGITSGVWVW. The Cytoplasmic segment spans residues 525–582; sequence TSKTLQSWQHVCSRGLKRKSRRKPASVVTSAGIYKKAQHPQKPHLGKYELPAQPSACV. The Lys-Thr-X-X-X-Trp motif, mediates interaction with the PDZ domain of Dvl family members motif lies at 527 to 532; it reads KTLQSW. Residues 561–582 are disordered; the sequence is AQHPQKPHLGKYELPAQPSACV. A PDZ-binding motif is present at residues 580-582; it reads ACV.

Belongs to the G-protein coupled receptor Fz/Smo family. Interacts with MYOC. Interacts with WNT7B. In terms of processing, ubiquitinated by ZNRF3, leading to its degradation by the proteasome.

It is found in the cell membrane. Its function is as follows. Receptor for Wnt proteins. Functions in the canonical Wnt/beta-catenin signaling pathway. The canonical Wnt/beta-catenin signaling pathway leads to the activation of disheveled proteins, inhibition of GSK-3 kinase, nuclear accumulation of beta-catenin and activation of Wnt target genes. A second signaling pathway involving PKC and calcium fluxes has been seen for some family members, but it is not yet clear if it represents a distinct pathway or if it can be integrated in the canonical pathway, as PKC seems to be required for Wnt-mediated inactivation of GSK-3 kinase. Both pathways seem to involve interactions with G-proteins. May be involved in transduction and intercellular transmission of polarity information during tissue morphogenesis and/or in differentiated tissues. The chain is Frizzled-10 (Fzd10) from Mus musculus (Mouse).